Here is a 257-residue protein sequence, read N- to C-terminus: Adenylate kinase (257 aa).

51 to 56 (GAGKGT) provides a ligand contact to ATP. Positions 71–100 (ATGDMLRSQVAKKTELGKEAKKIMDQGGLV) are NMP. Residues Thr72, Arg77, 98–100 (GLV), 127–130 (GFPR), and Gln134 each bind AMP. Residues 168–205 (GRLVHPASGRSYHKIFNPPKQEMKDDITGEPLIQRSDD) are LID. ATP is bound by residues Arg169 and 178 to 179 (SY). Arg202 and Arg213 together coordinate AMP. Gln241 lines the ATP pocket.

It belongs to the adenylate kinase family. AK2 subfamily. As to quaternary structure, monomer.

Its subcellular location is the cytoplasm. The protein resides in the cytosol. It is found in the mitochondrion intermembrane space. It catalyses the reaction AMP + ATP = 2 ADP. Functionally, catalyzes the reversible transfer of the terminal phosphate group between ATP and AMP. Plays an important role in cellular energy homeostasis and in adenine nucleotide metabolism. Adenylate kinase activity is critical for regulation of the phosphate utilization and the AMP de novo biosynthesis pathways. This chain is Adenylate kinase (adk1), found in Aspergillus terreus (strain NIH 2624 / FGSC A1156).